The following is a 347-amino-acid chain: Ataxin-7-like protein 3 (347 aa).

The segment at 84–105 adopts an SGF11-type zinc-finger fold; sequence CVCPNCSRSIAASRFAPHLEKC. Over residues 116–125 the composition is skewed to low complexity; that stretch reads ANRRIANSNN. The tract at residues 116 to 184 is disordered; it reads ANRRIANSNN…GELSNSDPFK (69 aa). Phosphoserine occurs at positions 129 and 131. The segment covering 132 to 141 has biased composition (acidic residues); that stretch reads DQEDNDDIND. Residues 196–263 form the SCA7 domain; the sequence is LGPEELRSLL…SLDNDGFDMT (68 aa). Positions 275-288 are enriched in low complexity; sequence DGSSDLSPSDSGSS. Residues 275 to 347 form a disordered region; the sequence is DGSSDLSPSD…PTPSIYDDIN (73 aa). Ser278, Ser281, and Ser326 each carry phosphoserine.

The protein belongs to the SGF11 family. As to quaternary structure, component of some SAGA transcription coactivator-HAT complexes, at least composed of ATXN7, ATXN7L3, ENY2, GCN5L2, SUPT3H, TAF10, TRRAP and USP22. Within the SAGA complex, ENY2, ATXN7, ATXN7L3, and USP22 form an additional subcomplex of SAGA called the DUB module (deubiquitination module). Interacts directly with ENY2 and USP22.

The protein resides in the nucleus. Functionally, component of the transcription regulatory histone acetylation (HAT) complex SAGA, a multiprotein complex that activates transcription by remodeling chromatin and mediating histone acetylation and deubiquitination. Within the SAGA complex, participates in a subcomplex that specifically deubiquitinates both histones H2A and H2B. The SAGA complex is recruited to specific gene promoters by activators such as MYC, where it is required for transcription. Required for nuclear receptor-mediated transactivation. Within the complex, it is required to recruit USP22 and ENY2 into the SAGA complex. Regulates H2B monoubiquitination (H2Bub1) levels. Affects subcellular distribution of ENY2, USP22 and ATXN7L3B. This Mus musculus (Mouse) protein is Ataxin-7-like protein 3 (Atxn7l3).